The chain runs to 97 residues: Exodeoxyribonuclease 7 small subunit (97 aa).

The segment at 1–22 is disordered; the sequence is MAKTASPGATPPDNGTEPLPDN.

The protein belongs to the XseB family. As to quaternary structure, heterooligomer composed of large and small subunits.

The protein localises to the cytoplasm. The catalysed reaction is Exonucleolytic cleavage in either 5'- to 3'- or 3'- to 5'-direction to yield nucleoside 5'-phosphates.. Its function is as follows. Bidirectionally degrades single-stranded DNA into large acid-insoluble oligonucleotides, which are then degraded further into small acid-soluble oligonucleotides. The polypeptide is Exodeoxyribonuclease 7 small subunit (Burkholderia ambifaria (strain MC40-6)).